A 545-amino-acid chain; its full sequence is ATP synthase subunit alpha (545 aa).

An ATP-binding site is contributed by 173 to 180 (GDRQTGKS).

It belongs to the ATPase alpha/beta chains family. In terms of assembly, F-type ATPases have 2 components, CF(1) - the catalytic core - and CF(0) - the membrane proton channel. CF(1) has five subunits: alpha(3), beta(3), gamma(1), delta(1), epsilon(1). CF(0) has three main subunits: a(1), b(2) and c(9-12). The alpha and beta chains form an alternating ring which encloses part of the gamma chain. CF(1) is attached to CF(0) by a central stalk formed by the gamma and epsilon chains, while a peripheral stalk is formed by the delta and b chains.

The protein resides in the cell membrane. The enzyme catalyses ATP + H2O + 4 H(+)(in) = ADP + phosphate + 5 H(+)(out). Produces ATP from ADP in the presence of a proton gradient across the membrane. The alpha chain is a regulatory subunit. This chain is ATP synthase subunit alpha, found in Pseudarthrobacter chlorophenolicus (strain ATCC 700700 / DSM 12829 / CIP 107037 / JCM 12360 / KCTC 9906 / NCIMB 13794 / A6) (Arthrobacter chlorophenolicus).